A 697-amino-acid chain; its full sequence is Elongation factor G 1 (697 aa).

The tr-type G domain maps to 8-283 (ERYRNFGIMA…AVVDFLPSPV (276 aa)). GTP contacts are provided by residues 17 to 24 (AHIDAGKT), 81 to 85 (DTPGH), and 135 to 138 (NKMD).

The protein belongs to the TRAFAC class translation factor GTPase superfamily. Classic translation factor GTPase family. EF-G/EF-2 subfamily.

The protein localises to the cytoplasm. Catalyzes the GTP-dependent ribosomal translocation step during translation elongation. During this step, the ribosome changes from the pre-translocational (PRE) to the post-translocational (POST) state as the newly formed A-site-bound peptidyl-tRNA and P-site-bound deacylated tRNA move to the P and E sites, respectively. Catalyzes the coordinated movement of the two tRNA molecules, the mRNA and conformational changes in the ribosome. The polypeptide is Elongation factor G 1 (Anaeromyxobacter dehalogenans (strain 2CP-C)).